The primary structure comprises 197 residues: Dermorphin-1 (197 aa).

The first 20 residues, 1-20 (MSFLKKSLLLILFLGLVSLS), serve as a signal peptide directing secretion. A propeptide spanning residues 21-45 (VCKEEKRETEEENENEENHEEGSEM) is cleaved from the precursor. Residues 24–197 (EEKRETEEEN…GYPSGEAKKM (174 aa)) are disordered. The span at 30 to 39 (EEENENEENH) shows a compositional bias: acidic residues. Over residues 40 to 62 (EEGSEMKRYMFHLMDGEAKKRDS) the composition is skewed to basic and acidic residues. Met49 carries the D-methionine modification. Residue Asp54 is modified to Aspartic acid 1-amide. Positions 56 to 77 (EAKKRDSEENEIEENHEEGSEM) are excised as a propeptide. D-alanine (Ala) is present on Ala81. Ser86 bears the Serine amide mark. Over residues 88–97 (EAKKIKRVSE) the composition is skewed to basic and acidic residues. Residues 88 to 112 (EAKKIKRVSEEENENEENHEEGSEM) constitute a propeptide that is removed on maturation. Ala116 carries the D-alanine (Ala) modification. The residue at position 121 (Ser121) is a Serine amide. Positions 123 to 132 (EAKKIKRESE) are enriched in basic and acidic residues. Residues 123–147 (EAKKIKRESEEEKEIEENHEEGSEM) constitute a propeptide that is removed on maturation. Ala151 bears the D-alanine (Ala) mark. Position 156 is a serine amide (Ser156). Residues 158-182 (EAKKIKRESEEENENEENHEEGSEM) constitute a propeptide that is removed on maturation. The segment covering 167 to 176 (EEENENEENH) has biased composition (acidic residues). The residue at position 186 (Ala186) is a D-alanine (Ala). Ser191 is modified (serine amide). A propeptide spanning residues 193-197 (EAKKM) is cleaved from the precursor.

This sequence belongs to the frog skin active peptide (FSAP) family. Dermorphin subfamily. In terms of tissue distribution, expressed by the skin glands.

The protein localises to the secreted. Functionally, dermorphin has a very potent opiate-like activity. It has high affinity and selectivity for mu-type opioid receptors. Deltorphin has a very potent opiate-like activity. It has high affinity and selectivity for delta-type opioid receptors. In Phyllomedusa sauvagei (Sauvage's leaf frog), this protein is Dermorphin-1.